We begin with the raw amino-acid sequence, 180 residues long: MLSVILLAIALAMDAFSISITKGFTQKKIQKQEILWYGIFFGGFQCFMPIIGYVCGTTIRSFISTYAPWIAFILLLCIGLNMIRESITSSDEKVADIFSFKEVTLLAIATSIDAFAVGVTFAILNISLVIPCAIIGIITFLFSIVGIFIGKKLGDYFGDKFQILGGVILILLGFKILLGF.

Helical transmembrane passes span 1–21, 34–54, 63–83, 103–123, 129–149, and 160–180; these read MLSV…ISIT, ILWY…IGYV, ISTY…LNMI, VTLL…TFAI, VIPC…GIFI, and KFQI…LLGF.

This sequence belongs to the MntP (TC 9.B.29) family.

Its subcellular location is the cell membrane. In terms of biological role, probably functions as a manganese efflux pump. In Methanosphaera stadtmanae (strain ATCC 43021 / DSM 3091 / JCM 11832 / MCB-3), this protein is Putative manganese efflux pump MntP.